A 612-amino-acid chain; its full sequence is Dihydroxy-acid dehydratase (612 aa).

Asp-81 is a Mg(2+) binding site. [2Fe-2S] cluster is bound at residue Cys-122. Mg(2+) is bound by residues Asp-123 and Lys-124. Lys-124 is subject to N6-carboxylysine. A [2Fe-2S] cluster-binding site is contributed by Cys-193. Glu-489 is a binding site for Mg(2+). Residue Ser-515 is the Proton acceptor of the active site.

This sequence belongs to the IlvD/Edd family. Homodimer. It depends on [2Fe-2S] cluster as a cofactor. Mg(2+) is required as a cofactor.

The enzyme catalyses (2R)-2,3-dihydroxy-3-methylbutanoate = 3-methyl-2-oxobutanoate + H2O. It carries out the reaction (2R,3R)-2,3-dihydroxy-3-methylpentanoate = (S)-3-methyl-2-oxopentanoate + H2O. Its pathway is amino-acid biosynthesis; L-isoleucine biosynthesis; L-isoleucine from 2-oxobutanoate: step 3/4. It functions in the pathway amino-acid biosynthesis; L-valine biosynthesis; L-valine from pyruvate: step 3/4. Functions in the biosynthesis of branched-chain amino acids. Catalyzes the dehydration of (2R,3R)-2,3-dihydroxy-3-methylpentanoate (2,3-dihydroxy-3-methylvalerate) into 2-oxo-3-methylpentanoate (2-oxo-3-methylvalerate) and of (2R)-2,3-dihydroxy-3-methylbutanoate (2,3-dihydroxyisovalerate) into 2-oxo-3-methylbutanoate (2-oxoisovalerate), the penultimate precursor to L-isoleucine and L-valine, respectively. This Azotobacter vinelandii (strain DJ / ATCC BAA-1303) protein is Dihydroxy-acid dehydratase.